The primary structure comprises 367 residues: Testis-specific serine/threonine-protein kinase 1 (367 aa).

A Protein kinase domain is found at 12–272 (YLLGINLGEG…IDEILSHCWM (261 aa)). ATP is bound by residues 18-26 (LGEGSYAKV) and Lys41. Asp136 functions as the Proton acceptor in the catalytic mechanism. A Phosphothreonine modification is found at Thr174. The disordered stretch occupies residues 276–367 (ARGSPSVAIN…PQQPPETRAQ (92 aa)). Positions 303 to 314 (GSDKKSATKLEP) are enriched in basic and acidic residues.

The protein belongs to the protein kinase superfamily. CAMK Ser/Thr protein kinase family. As to quaternary structure, interacts with TSSK2. Interacts with HSP90; this interaction stabilizes TSSK1. Requires Mg(2+) as cofactor. Post-translationally, autophosphorylated. Ubiquitinated; HSP90 activity negatively regulates ubiquitination and degradation. Testis-specific. Present in sperm (at protein level).

It is found in the cytoplasm. It localises to the cytoplasmic vesicle. Its subcellular location is the secretory vesicle. The protein resides in the acrosome. The protein localises to the cell projection. It is found in the cilium. It localises to the flagellum. It carries out the reaction L-seryl-[protein] + ATP = O-phospho-L-seryl-[protein] + ADP + H(+). The enzyme catalyses L-threonyl-[protein] + ATP = O-phospho-L-threonyl-[protein] + ADP + H(+). With respect to regulation, kinase activity is specifically inhibited by 2 classes of compounds: biphenyl compounds (1,1'-(biphenyl-4,4'-diyl)bis(2,2-dihydroxyethanone)) and 1,2,7-trialky-1H-imidazo[4,5-g]quinoxalin-6-one. Activated by phosphorylation on Thr-174 and potentially by autophosphorylation. Functionally, testis-specific serine/threonine-protein kinase required during spermatid development. Phosphorylates 'Ser-288' of TSKS. Involved in the late stages of spermatogenesis, during the reconstruction of the cytoplasm. During spermatogenesis, required for the transformation of a ring-shaped structure around the base of the flagellum originating from the chromatoid body. This Homo sapiens (Human) protein is Testis-specific serine/threonine-protein kinase 1 (TSSK1B).